A 497-amino-acid chain; its full sequence is Glycerol kinase (497 aa).

T12 serves as a coordination point for ADP. 3 residues coordinate ATP: T12, T13, and S14. A sn-glycerol 3-phosphate-binding site is contributed by T12. R16 is an ADP binding site. Sn-glycerol 3-phosphate-binding residues include R82, E83, Y134, and D243. R82, E83, Y134, D243, and Q244 together coordinate glycerol. ADP-binding residues include T265 and G308. 4 residues coordinate ATP: T265, G308, Q312, and G409. Residues G409 and N413 each coordinate ADP.

The protein belongs to the FGGY kinase family.

The enzyme catalyses glycerol + ATP = sn-glycerol 3-phosphate + ADP + H(+). Its pathway is polyol metabolism; glycerol degradation via glycerol kinase pathway; sn-glycerol 3-phosphate from glycerol: step 1/1. Inhibited by fructose 1,6-bisphosphate (FBP). Its function is as follows. Key enzyme in the regulation of glycerol uptake and metabolism. Catalyzes the phosphorylation of glycerol to yield sn-glycerol 3-phosphate. The sequence is that of Glycerol kinase from Solidesulfovibrio magneticus (strain ATCC 700980 / DSM 13731 / RS-1) (Desulfovibrio magneticus).